The following is a 695-amino-acid chain: Nucleoprotein (695 aa).

Coiled coils occupy residues 316-341 (VNVG…RRHE) and 372-400 (QTLA…EDQG). Disordered stretches follow at residues 426-458 (RSIN…SFVD) and 472-611 (TLEN…EDTR). The span at 474-484 (ENSVMAPSTTL) shows a compositional bias: polar residues. A compositionally biased stretch (basic and acidic residues) spans 502–516 (ISQKKQGNESTDPAR). A compositionally biased stretch (acidic residues) spans 529-547 (QEDDESEYTTDSQESDDQP). The PTAP/PSAP motif signature appears at 603–606 (PSAP).

Belongs to the filoviruses nucleoprotein family. In terms of assembly, homooligomer. Homomultimerizes to form the nucleocapsid. Binds to viral genomic RNA. Interacts with VP35 and VP30 to form the nucleocapsid. Also interacts with VP24 and VP40. Post-translationally, phosphorylated.

The protein localises to the virion. Its subcellular location is the host cytoplasm. Its function is as follows. Encapsidates the genome, protecting it from nucleases. The encapsidated genomic RNA is termed the nucleocapsid and serves as template for transcription and replication. During replication, encapsidation by NP is coupled to RNA synthesis and all replicative products are resistant to nucleases. This Lake Victoria marburgvirus (strain Ravn-87) (MARV) protein is Nucleoprotein (NP).